The following is a 285-amino-acid chain: Bifunctional protein FolD (285 aa).

NADP(+) contacts are provided by residues 165 to 167, S190, and I231; that span reads GRS.

Belongs to the tetrahydrofolate dehydrogenase/cyclohydrolase family. In terms of assembly, homodimer.

It carries out the reaction (6R)-5,10-methylene-5,6,7,8-tetrahydrofolate + NADP(+) = (6R)-5,10-methenyltetrahydrofolate + NADPH. It catalyses the reaction (6R)-5,10-methenyltetrahydrofolate + H2O = (6R)-10-formyltetrahydrofolate + H(+). The protein operates within one-carbon metabolism; tetrahydrofolate interconversion. Functionally, catalyzes the oxidation of 5,10-methylenetetrahydrofolate to 5,10-methenyltetrahydrofolate and then the hydrolysis of 5,10-methenyltetrahydrofolate to 10-formyltetrahydrofolate. This is Bifunctional protein FolD from Alkaliphilus oremlandii (strain OhILAs) (Clostridium oremlandii (strain OhILAs)).